Here is a 359-residue protein sequence, read N- to C-terminus: Peptide chain release factor 1 (359 aa).

Glutamine 236 is subject to N5-methylglutamine.

It belongs to the prokaryotic/mitochondrial release factor family. Methylated by PrmC. Methylation increases the termination efficiency of RF1.

It localises to the cytoplasm. Peptide chain release factor 1 directs the termination of translation in response to the peptide chain termination codons UAG and UAA. The polypeptide is Peptide chain release factor 1 (Malacoplasma penetrans (strain HF-2) (Mycoplasma penetrans)).